The following is a 328-amino-acid chain: Transcription factor bHLH84 (328 aa).

The segment at 145 to 248 (QCESSKKRTR…ASRGAATDPQ (104 aa)) is disordered. The segment covering 220–229 (LSKEDGEDSK) has biased composition (basic and acidic residues). The bHLH domain occupies 243 to 292 (AATDPQSLYARKRRERINERLRILQHLVPNGTKVDISTMLEEAVQYVKFL).

Belongs to the bHLH protein family. In terms of assembly, homodimer.

Its subcellular location is the nucleus. The sequence is that of Transcription factor bHLH84 (BHLH84) from Arabidopsis thaliana (Mouse-ear cress).